The chain runs to 503 residues: Lactation elevated protein 1 homolog B (503 aa).

Positions 108–155 (LQNQPTSELQDKVGSRETVNICRPDENVSNEKEDQQEESSKPHPPQGY) are disordered. Over residues 130–148 (RPDENVSNEKEDQQEESSK) the composition is skewed to basic and acidic residues. 159–166 (GNVGTGKT) provides a ligand contact to ATP.

The protein belongs to the AFG1 ATPase family.

This is Lactation elevated protein 1 homolog B (lace1b) from Danio rerio (Zebrafish).